Consider the following 513-residue polypeptide: Genome polyprotein (513 aa).

N-acetylserine; by host is present on Ser2. The tract at residues 2 to 23 (STNPKPQRKTKRNTNRRPQDVK) is interaction with STAT1. Residues 2 to 58 (STNPKPQRKTKRNTNRRPQDVKFPGGGQIVGGVYLLPRRGPRLGVRATRKTSERSQP) form an interaction with EIF2AK2/PKR region. Positions 2 to 59 (STNPKPQRKTKRNTNRRPQDVKFPGGGQIVGGVYLLPRRGPRLGVRATRKTSERSQPR) are interaction with DDX3X. Residues 2-75 (STNPKPQRKT…PKARRPEGRA (74 aa)) form a disordered region. The Cytoplasmic portion of the chain corresponds to 2–168 (STNPKPQRKT…EDSVNYATGN (167 aa)). 2 short sequence motifs (nuclear localization signal) span residues 5–13 (PKPQRKTKR) and 38–43 (PRRGPR). Over residues 7–16 (PQRKTKRNTN) the composition is skewed to basic residues. Residues 32–47 (GGVYLLPRRGPRLGVR) show a composition bias toward low complexity. Phosphoserine; by host is present on Ser53. 2 consecutive short sequence motifs (nuclear localization signal) follow at residues 58 to 64 (PRGRRQP) and 66 to 71 (PKARRP). Residues 58-68 (PRGRRQPIPKA) show a composition bias toward basic residues. Ser99 carries the post-translational modification Phosphoserine; by host. Positions 112–152 (PRRRSRNLGKVIDTLTCGFADLMGYIPLVGAPLGGAARALA) are important for endoplasmic reticulum and mitochondrial localization. Ser116 carries the post-translational modification Phosphoserine; by host PKA. The interaction with APOA2 stretch occupies residues 122-173 (VIDTLTCGFADLMGYIPLVGAPLGGAARALAHGVRVLEDSVNYATGNLPGCS). An important for lipid droplets localization region spans residues 164 to 167 (YATG). The chain crosses the membrane as a helical span at residues 169–189 (LPGCSFSIFLLALLSCLTIPA). Residues 178–191 (LLALLSCLTIPASA) constitute a propeptide, ER anchor for the core protein, removed in mature form by host signal peptidase. Residues 190 to 358 (SAYEVRNVSG…TGAHWGVLAG (169 aa)) lie on the Lumenal side of the membrane. Asn196, Asn209, Asn234, and Asn250 each carry an N-linked (GlcNAc...) asparagine; by host glycan. Residues 265–296 (LVGAATFCSAMYVGDLCGSVFLVSQLFTFSPR) form an important for fusion region. The N-linked (GlcNAc...) asparagine; by host glycan is linked to Asn305. A helical membrane pass occupies residues 359-379 (LAYYSMVGNWAKVLIVMLLFA). The Lumenal segment spans residues 380-513 (GVDGTTHVTG…GPVYCFTPSP (134 aa)). The HVR1 stretch occupies residues 385–411 (THVTGGATGHTTSGIASLFLPGASQKI). N-linked (GlcNAc...) (high mannose) asparagine; by host glycans are attached at residues Asn417, Asn423, Asn430, and Asn448. An HVR2 region spans residues 474–479 (YTEPGD). The tract at residues 480–493 (SDQKPYCWHYAPQR) is CD81-binding 1.

Belongs to the hepacivirus polyprotein family. As to quaternary structure, homooligomer. Interacts with E1 (via C-terminus). Interacts with the non-structural protein 5A. Interacts (via N-terminus) with host STAT1 (via SH2 domain); this interaction results in decreased STAT1 phosphorylation and ubiquitin-mediated proteasome-dependent STAT1 degradation, leading to decreased IFN-stimulated gene transcription. Interacts with host STAT3; this interaction constitutively activates STAT3. Interacts with host LTBR receptor. Interacts with host TNFRSF1A receptor and possibly induces apoptosis. Interacts with host HNRPK. Interacts with host YWHAE. Interacts with host UBE3A/E6AP. Interacts with host DDX3X. Interacts with host APOA2. Interacts with host RXRA protein. Interacts with host SP110 isoform 3/Sp110b; this interaction sequesters the transcriptional corepressor SP110 away from the nucleus. Interacts with host CREB3 nuclear transcription protein; this interaction triggers cell transformation. Interacts with host ACY3. Interacts with host C1QR1. Interacts with host RBM24; this interaction, which enhances the interaction of the mature core protein with 5'-UTR, may inhibit viral translation and favor replication. Interacts with host EIF2AK2/PKR; this interaction induces the autophosphorylation of EIF2AK2. Part of the viral assembly initiation complex composed of NS2, E1, E2, NS3, NS4A, NS5A and the mature core protein. In terms of assembly, forms a heterodimer with envelope glycoprotein E2. Interacts with mature core protein. Interacts with protease NS2. The heterodimer E1/E2 interacts with host CLDN1; this interaction plays a role in viral entry into host cell. Interacts with host SPSB2 (via C-terminus). Part of the viral assembly initiation complex composed of NS2, E1, E2, NS3, NS4A, NS5A and the mature core protein. Forms a heterodimer with envelope glycoprotein E1. Interacts with host CD81 and SCARB1 receptors; these interactions play a role in viral entry into host cell. Interacts with host EIF2AK2/PKR; this interaction inhibits EIF2AK2 and probably allows the virus to evade the innate immune response. Interacts with host CD209/DC-SIGN and CLEC4M/DC-SIGNR. Interact with host SPCS1; this interaction is essential for viral particle assembly. Interacts with protease NS2. The heterodimer E1/E2 interacts with host CLDN1; this interaction plays a role in viral entry into host cell. Part of the viral assembly initiation complex composed of NS2, E1, E2, NS3, NS4A, NS5A and the mature core protein. Post-translationally, specific enzymatic cleavages in vivo yield mature proteins. The structural proteins, core, E1, E2 and p7 are produced by proteolytic processing by host signal peptidases. The core protein precursor is synthesized as a 23 kDa, which is retained in the ER membrane through the hydrophobic signal peptide. Cleavage by the signal peptidase releases the 21 kDa mature core protein. The cleavage of the core protein precursor occurs between aminoacids 176 and 188 but the exact cleavage site is not known. Some degraded forms of the core protein appear as well during the course of infection. The other proteins (p7, NS2, NS3, NS4A, NS4B, NS5A and NS5B) are cleaved by the viral proteases. Autoprocessing between NS2 and NS3 is mediated by the NS2 cysteine protease catalytic domain and regulated by the NS3 N-terminal domain. Phosphorylated by host PKC and PKA. In terms of processing, ubiquitinated; mediated by UBE3A and leading to core protein subsequent proteasomal degradation. Post-translationally, highly N-glycosylated.

Its subcellular location is the host endoplasmic reticulum membrane. The protein localises to the host mitochondrion membrane. It is found in the virion. The protein resides in the host cytoplasm. It localises to the host nucleus. Its subcellular location is the host lipid droplet. The protein localises to the virion membrane. Packages viral RNA to form a viral nucleocapsid, and promotes virion budding. Participates in the viral particle production as a result of its interaction with the non-structural protein 5A. Binds RNA and may function as a RNA chaperone to induce the RNA structural rearrangements taking place during virus replication. Modulates viral translation initiation by interacting with viral IRES and 40S ribosomal subunit. Affects various cell signaling pathways, host immunity and lipid metabolism. Prevents the establishment of cellular antiviral state by blocking the interferon-alpha/beta (IFN-alpha/beta) and IFN-gamma signaling pathways and by blocking the formation of phosphorylated STAT1 and promoting ubiquitin-mediated proteasome-dependent degradation of STAT1. Activates STAT3 leading to cellular transformation. Regulates the activity of cellular genes, including c-myc and c-fos. May repress the promoter of p53, and sequester CREB3 and SP110 isoform 3/Sp110b in the cytoplasm. Represses cell cycle negative regulating factor CDKN1A, thereby interrupting an important check point of normal cell cycle regulation. Targets transcription factors involved in the regulation of inflammatory responses and in the immune response: suppresses TNF-induced NF-kappa-B activation, and activates AP-1. Binds to dendritic cells (DCs) via C1QR1, resulting in down-regulation of T-lymphocytes proliferation. Alters lipid metabolism by interacting with hepatocellular proteins involved in lipid accumulation and storage. Induces up-regulation of FAS promoter activity, and thereby contributes to the increased triglyceride accumulation in hepatocytes (steatosis). In terms of biological role, forms a heterodimer with envelope glycoprotein E2, which mediates virus attachment to the host cell, virion internalization through clathrin-dependent endocytosis and fusion with host membrane. Fusion with the host cell is most likely mediated by both E1 and E2, through conformational rearrangements of the heterodimer required for fusion rather than a classical class II fusion mechanism. E1/E2 heterodimer binds host apolipoproteins such as APOB and ApoE thereby forming a lipo-viro-particle (LVP). APOE associated to the LVP allows the initial virus attachment to cell surface receptors such as the heparan sulfate proteoglycans (HSPGs), syndecan-1 (SDC1), syndecan-1 (SDC2), the low-density lipoprotein receptor (LDLR) and scavenger receptor class B type I (SCARB1). The cholesterol transfer activity of SCARB1 allows E2 exposure and binding of E2 to SCARB1 and the tetraspanin CD81. E1/E2 heterodimer binding on CD81 activates the epithelial growth factor receptor (EGFR) signaling pathway. Diffusion of the complex E1-E2-EGFR-SCARB1-CD81 to the cell lateral membrane allows further interaction with Claudin 1 (CLDN1) and occludin (OCLN) to finally trigger HCV entry. Its function is as follows. Forms a heterodimer with envelope glycoprotein E1, which mediates virus attachment to the host cell, virion internalization through clathrin-dependent endocytosis and fusion with host membrane. Fusion with the host cell is most likely mediated by both E1 and E2, through conformational rearrangements of the heterodimer required for fusion rather than a classical class II fusion mechanism. The interaction between envelope glycoprotein E2 and host apolipoprotein E/APOE allows the proper assembly, maturation and infectivity of the viral particles. This interaction is probably promoted via the up-regulation of cellular autophagy by the virus. E1/E2 heterodimer binds host apolipoproteins such as APOB and APOE thereby forming a lipo-viro-particle (LVP). APOE associated to the LVP allows the initial virus attachment to cell surface receptors such as the heparan sulfate proteoglycans (HSPGs), syndecan-1 (SDC1), syndecan-1 (SDC2), the low-density lipoprotein receptor (LDLR) and scavenger receptor class B type I (SCARB1). The cholesterol transfer activity of SCARB1 allows E2 exposure and binding of E2 to SCARB1 and the tetraspanin CD81. E1/E2 heterodimer binding on CD81 activates the epithelial growth factor receptor (EGFR) signaling pathway. Diffusion of the complex E1-E2-EGFR-SCARB1-CD81 to the cell lateral membrane allows further interaction with Claudin 1 (CLDN1) and occludin (OCLN) to finally trigger HCV entry. Inhibits host EIF2AK2/PKR activation, preventing the establishment of an antiviral state. Viral ligand for CD209/DC-SIGN and CLEC4M/DC-SIGNR, which are respectively found on dendritic cells (DCs), and on liver sinusoidal endothelial cells and macrophage-like cells of lymph node sinuses. These interactions allow the capture of circulating HCV particles by these cells and subsequent facilitated transmission to permissive cells such as hepatocytes and lymphocyte subpopulations. This chain is Genome polyprotein, found in Homo sapiens (Human).